A 234-amino-acid chain; its full sequence is MTNIRKTHPLLKIVNHSLIDLPAPSNISAWWNFGSLLGLCLMIQILTGLFLAMHYTSDTATAFSSVTHICRDVNYGWLIRYLHANGASMFFICLYMHVGRGIYYGSYTYLETWNIGIILLFAVMATAFMGYVLPWGQMSFWGATVITNLLSAIPYIGTTLVEWIWGGFSVDKATLTRFFAFHFILPFIIAALVMIHLLFLHETGSNNPSGIPSDSDKIPFHPYYTIKDLLGFLV.

4 consecutive transmembrane segments (helical) span residues 33–53 (FGSLLGLCLMIQILTGLFLAM), 77–98 (WLIRYLHANGASMFFICLYMHV), 113–133 (WNIGIILLFAVMATAFMGYVL), and 178–198 (FFAFHFILPFIIAALVMIHLL). Heme b is bound by residues H83 and H97. The heme b site is built by H182 and H196. H201 contributes to the a ubiquinone binding site. A helical membrane pass occupies residues 226–234 (IKDLLGFLV).

It belongs to the cytochrome b family. As to quaternary structure, the cytochrome bc1 complex contains 11 subunits: 3 respiratory subunits (MT-CYB, CYC1 and UQCRFS1), 2 core proteins (UQCRC1 and UQCRC2) and 6 low-molecular weight proteins (UQCRH/QCR6, UQCRB/QCR7, UQCRQ/QCR8, UQCR10/QCR9, UQCR11/QCR10 and a cleavage product of UQCRFS1). This cytochrome bc1 complex then forms a dimer. It depends on heme b as a cofactor.

It localises to the mitochondrion inner membrane. Functionally, component of the ubiquinol-cytochrome c reductase complex (complex III or cytochrome b-c1 complex) that is part of the mitochondrial respiratory chain. The b-c1 complex mediates electron transfer from ubiquinol to cytochrome c. Contributes to the generation of a proton gradient across the mitochondrial membrane that is then used for ATP synthesis. The chain is Cytochrome b (MT-CYB) from Lepus arcticus (Arctic hare).